The primary structure comprises 834 residues: Probable phosphoenolpyruvate synthase (834 aa).

H447 acts as the Tele-phosphohistidine intermediate in catalysis. R550, R598, E699, G720, S721, N722, and D723 together coordinate substrate. E699 lines the Mg(2+) pocket. D723 contacts Mg(2+). C772 functions as the Proton donor in the catalytic mechanism.

The protein belongs to the PEP-utilizing enzyme family. Homooligomer. Forms a large complex of about 2000 kDa. It depends on Mg(2+) as a cofactor. In terms of processing, the N-terminus is blocked.

It catalyses the reaction pyruvate + ATP + H2O = phosphoenolpyruvate + AMP + phosphate + 2 H(+). It participates in carbohydrate biosynthesis; gluconeogenesis. Its function is as follows. Catalyzes the phosphorylation of pyruvate to phosphoenolpyruvate. In Staphylothermus marinus (strain ATCC 43588 / DSM 3639 / JCM 9404 / F1), this protein is Probable phosphoenolpyruvate synthase (ppsA).